The primary structure comprises 200 residues: MIFHQFYSILILCLIFPNQVVQSDKERQDWIPSDYGGYMNPAGRSDEERQDWIPSDYGGHMNPAGRSDEERQDWIPSDYGGHMNPAGRSNEERQDWIPSDYGGYMNPAGRSDEERQDWIPSDYGGHMNPAGRSNEERQDWIPSDYGGYMNPAGRSDEERQDWIPSDYGGHMNPAGRSDEERQDWIPSDYGGYMNPAGRSD.

The first 23 residues, 1-23 (MIFHQFYSILILCLIFPNQVVQS), serve as a signal peptide directing secretion. The propeptide occupies 24-34 (DKERQDWIPSD). The tract at residues 30-200 (WIPSDYGGYM…GYMNPAGRSD (171 aa)) is disordered. Alanine amide is present on A42. A propeptide spanning residues 45-100 (SDEERQDWIPSDYGGHMNPAGRSDEERQDWIPSDYGGHMNPAGRSNEERQDWIPSD) is cleaved from the precursor. Position 108 is an alanine amide (A108). Positions 111 to 144 (SDEERQDWIPSDYGGHMNPAGRSNEERQDWIPSD) are excised as a propeptide. A152 is modified (alanine amide). Positions 155–188 (SDEERQDWIPSDYGGHMNPAGRSDEERQDWIPSD) are excised as a propeptide. A196 carries the alanine amide modification. A propeptide spanning residues 199–200 (SD) is cleaved from the precursor.

Venom gland.

The protein localises to the secreted. In terms of biological role, synthetic BmK-YA activates human opioid receptors in vitro, with highest activity on the delta-type/OPRD1 receptor (EC(50)=2.5 uM) and lower activity on mu-type/OPRM1 and kappa-type/OPRK1 receptors (EC(50)=17 uM and 30 uM, respectively). This is BmK-YA precursor from Olivierus martensii (Manchurian scorpion).